A 1263-amino-acid chain; its full sequence is MKEISCGRRTRVSFGKSREPLPIPDLVEIQKISYRRFLEEGLLEVLKKFSPIYSQATRSDLKKSDRGFALEFVSTRIGEPVVDPLECKAKGLTYSVPIYATARLTDMKSGEMKEEEVFLGYIPYMTDRGTFIINGAERVVVNQIVVSPGLYFSSEYIDREEYGGYFLPSRGAWLEVILDPYDGVLYAGLDGKKVNLFLFLKTIGYEKDEDILSLYPTYLDADDEDSLLLHVGSILLEDIYDGDRKIAEKWDILTKDLAERILMIDDINQIKIVHPIAQNTFEKMLELVSSSGEEGEEEEEKTKIYGLNEVTVVDAYLEIFRRLRPEELPRINAAKRYLHDLFFNPERYDLSEVGRYKVNERLRNAYIRYLIEVEGEDPEEARKKVYNETSLVLKPLDIVLASRILFDYFERRYVNDFEIDSYELKNLIRIFKEEYLEKRKTAPYDLRKLVSVFRRNYGVTSDLGVFAAIRYVSNINKELPSIPFDTKDHLGNKRVRTVGELVQREFERLFARAQKAIQERLTLINSLSKVSIQSLINIKSIISTVNQFFAMNQLSQFMDQVNPLSELTHKRRVSAVGPGGLRRESKVFEARNVHYSQYGRLCPIETPEGANIGFITSLAIYAKIDEYGFLMTPYRKVVNGKVTDEVVYLRANEEEEYKIIPATTPVDEEGNIIPERVVARMGEDIRLVPKEEVDFMDVSTKQPFSVSASLIPFLEHDDASRALMGSNMQRQAVPLLKTEAPLVGTGMEWEAAKNSGYVVLAEHDGIVKEVDAARVVVHRTDENGNLMYDDKGNPVVDEYRLLKFVRSNQDTMINQKPIVNEGDFVKKGDPIADGPATDMGELALGRNILVAFMPWEGYNYEDAILVSQELLEEDVFTSIHIEVYETQARETRLGPEEITADIPNVSKELLKNLDENGIIRVGAYVVSDYGVGSQAILVGKVTPKGEGDTTPEEKIIRSVFGERGRDVKDTSLRLPHGVEGRVIRVDVYDQNDIAELGAGVLKLVRVYVASRKTLDIGDKLAGRHGNKGVVSNILPKEDMPFLPDGTPVQMVLNPLGIPSRMNVGQILETHLGWLAKLTGKWFATPVFEGAKEDEILRPLYEERKKRGLHLGDDENNPNGKVVLRDGRTGEPFDNPVVVGYMYMLKLIHIAKEKIHARSTGPYSLIHQQPLGGKSHFGGQRLGEMEVWALEAYGAAHTLAEMLTIKSDDIKGRNEAYKAILKNMNIPEPGVPESFRVLIKELRGLALDVRLYDENGNEIDIDKY.

This sequence belongs to the RNA polymerase beta chain family. In terms of assembly, the RNAP catalytic core consists of 2 alpha, 1 beta, 1 beta' and 1 omega subunit. When a sigma factor is associated with the core the holoenzyme is formed, which can initiate transcription.

The enzyme catalyses RNA(n) + a ribonucleoside 5'-triphosphate = RNA(n+1) + diphosphate. In terms of biological role, DNA-dependent RNA polymerase catalyzes the transcription of DNA into RNA using the four ribonucleoside triphosphates as substrates. The chain is DNA-directed RNA polymerase subunit beta from Thermotoga sp. (strain RQ2).